Consider the following 274-residue polypeptide: HMP-PP phosphatase (274 aa).

The active-site Nucleophile is D8. Positions 8, 10, and 213 each coordinate Mg(2+).

It belongs to the HAD-like hydrolase superfamily. Cof family. Mg(2+) is required as a cofactor.

It catalyses the reaction 4-amino-2-methyl-5-(diphosphooxymethyl)pyrimidine + H2O = 4-amino-2-methyl-5-(phosphooxymethyl)pyrimidine + phosphate + H(+). In terms of biological role, catalyzes the hydrolysis of 4-amino-2-methyl-5-hydroxymethylpyrimidine pyrophosphate (HMP-PP) to 4-amino-2-methyl-5-hydroxymethylpyrimidine phosphate (HMP-P). This is HMP-PP phosphatase from Serratia proteamaculans (strain 568).